The following is a 426-amino-acid chain: Glutamyl-tRNA reductase (426 aa).

Substrate-binding positions include 49-52 (TCNR), Ser-110, 115-117 (EAQ), and Gln-121. Cys-50 functions as the Nucleophile in the catalytic mechanism. An NADP(+)-binding site is contributed by 191–196 (GAGEMA).

The protein belongs to the glutamyl-tRNA reductase family. As to quaternary structure, homodimer.

The catalysed reaction is (S)-4-amino-5-oxopentanoate + tRNA(Glu) + NADP(+) = L-glutamyl-tRNA(Glu) + NADPH + H(+). It functions in the pathway porphyrin-containing compound metabolism; protoporphyrin-IX biosynthesis; 5-aminolevulinate from L-glutamyl-tRNA(Glu): step 1/2. Catalyzes the NADPH-dependent reduction of glutamyl-tRNA(Glu) to glutamate 1-semialdehyde (GSA). In Rhodopirellula baltica (strain DSM 10527 / NCIMB 13988 / SH1), this protein is Glutamyl-tRNA reductase.